Consider the following 322-residue polypeptide: CXXC-type zinc finger protein 5 (322 aa).

A compositionally biased stretch (gly residues) spans 1–10; it reads MSSLGGGSQD. Residues 1–100 are disordered; it reads MSSLGGGSQD…SGGGSMMGGE (100 aa). Composition is skewed to low complexity over residues 11–20 and 28–52; these read AGGSSSSSTN and SGPK…VADD. Threonine 53 is modified (phosphothreonine). Residues 87–97 are compositionally biased toward gly residues; it reads SSGGSGGGSMM. The CXXC-type zinc finger occupies 256–297; it reads GKKKRKRCGMCAPCRRRINCEQCSSCRNRKTGHQICKFRKCE. The Nuclear localization signal motif lies at 257–262; sequence KKKRKR. Zn(2+) is bound by residues cysteine 263, cysteine 266, cysteine 269, cysteine 275, cysteine 278, cysteine 281, cysteine 291, and cysteine 296.

As to quaternary structure, interacts with DVL1. Interacts with RBPJ.

The protein resides in the nucleus. Its subcellular location is the cytoplasm. Functionally, may indirectly participate in activation of the NF-kappa-B and MAPK pathways. Acts as a mediator of BMP4-mediated modulation of canonical Wnt signaling activity in neural stem cells. Required for DNA damage-induced ATM phosphorylation, p53 activation and cell cycle arrest. Involved in myelopoiesis. Binds to the oxygen responsive element of COX4I2 and represses its transcription under hypoxia conditions (4% oxygen), as well as normoxia conditions (20% oxygen). May repress COX4I2 transactivation induced by CHCHD2 and RBPJ. Binds preferentially to DNA containing cytidine-phosphate-guanosine (CpG) dinucleotides over CpH (H=A, T, and C), hemimethylated-CpG and hemimethylated-hydroxymethyl-CpG. The protein is CXXC-type zinc finger protein 5 (CXXC5) of Pongo abelii (Sumatran orangutan).